The sequence spans 204 residues: Prephenate decarboxylase (204 aa).

The protein belongs to the prephenate decarboxylase family.

The protein resides in the cytoplasm. It carries out the reaction prephenate + H(+) = 3-[(4R)-4-hydroxycyclohexa-1,5-dien-1-yl]-2-oxopropanoate + CO2. It functions in the pathway antibiotic biosynthesis; bacilysin biosynthesis. Its function is as follows. Part of the bacABCDEF operon responsible for the biosynthesis of the nonribosomally synthesized dipeptide antibiotic bacilysin, composed of L-alanine and L-anticapsin. Bacilysin is an irreversible inactivator of the glutaminase domain of glucosamine synthetase. BacA is an unusual prephenate decarboxylase that avoids the typical aromatization of the cyclohexadienol ring of prephenate. BacA catalyzes the protonation of prephenate (1-carboxy-4-hydroxy-alpha-oxo-2,5-cyclohexadiene-1-propanoic acid) at C6 position, followed by a decarboxylation to produce the endocyclic-delta(4),delta(8)-7R-dihydro-hydroxyphenylpyruvate (en-H2HPP). En-H2HPP is able to undergo a slow nonenzymatic isomerization to produce the exocyclic-delta(3),delta(5)-dihydro-hydroxyphenylpyruvate (ex-H2HPP). BacA isomerizes only the pro-R double bond in prephenate. The polypeptide is Prephenate decarboxylase (Bacillus subtilis).